A 104-amino-acid chain; its full sequence is Antitoxin HigA-2 (104 aa).

The HTH cro/C1-type domain occupies 45–98; sequence IVSIREQFNMSRGVFARLLHTSSRTLENWEQGRSVPNGQAVTLLKLVQRHPETL. Positions 56 to 75 form a DNA-binding region, H-T-H motif; that stretch reads RGVFARLLHTSSRTLENWEQ.

Its function is as follows. Antitoxin component of a type II toxin-antitoxin (TA) system that counteracts the effect of the HigB-2 toxin. Binds to its own promoter and regulates transcription of the higB-2/higA-2 operon. This chain is Antitoxin HigA-2 (higA-2), found in Vibrio cholerae serotype O1 (strain ATCC 39315 / El Tor Inaba N16961).